The sequence spans 599 residues: Leishmanolysin (599 aa).

Residues 1 to 39 (MSVDSSSTHRHRSVAARLVRLAAAGAAVIAAVGTAAAWA) form the signal peptide. Positions 40-97 (HAGAVQHRCIHDAMQARVRQSVARHHTAPGAVSAVGLPYVTLDTAAAADRRPGSAPTV) are cleaved as a propeptide — activation peptide. Disulfide bonds link C122/C139 and C188/C227. H261 contacts Zn(2+). E262 is a catalytic residue. Residue H265 coordinates Zn(2+). N297 carries N-linked (GlcNAc...) asparagine glycosylation. Intrachain disulfides connect C311-C383, C390-C452, C403-C422, C412-C486, C463-C507, C512-C562, and C532-C555. Position 331 (H331) interacts with Zn(2+). An N-linked (GlcNAc...) asparagine glycan is attached at N394. Residue N574 is the site of GPI-anchor amidated asparagine attachment. A propeptide spans 575-599 (AAAGRRGPRAAATALLVAALLAVAL) (removed in mature form).

The protein belongs to the peptidase M8 family. Requires Zn(2+) as cofactor.

It is found in the cell membrane. It carries out the reaction Preference for hydrophobic residues at P1 and P1' and basic residues at P2' and P3'. A model nonapeptide is cleaved at -Ala-Tyr-|-Leu-Lys-Lys-.. In terms of biological role, has an integral role during the infection of macrophages in the mammalian host. The protein is Leishmanolysin (gp63) of Leishmania chagasi.